The sequence spans 113 residues: Small ribosomal subunit protein uS14m (113 aa).

This sequence belongs to the universal ribosomal protein uS14 family. Component of the mitochondrial small ribosomal subunit (mt-SSU). Mature N.crassa 74S mitochondrial ribosomes consist of a small (37S) and a large (54S) subunit. The 37S small subunit contains a 16S ribosomal RNA (16S mt-rRNA) and 32 different proteins. The 54S large subunit contains a 23S rRNA (23S mt-rRNA) and 42 different proteins.

The protein resides in the mitochondrion. Its function is as follows. Component of the mitochondrial ribosome (mitoribosome), a dedicated translation machinery responsible for the synthesis of mitochondrial genome-encoded proteins, including at least some of the essential transmembrane subunits of the mitochondrial respiratory chain. The mitoribosomes are attached to the mitochondrial inner membrane and translation products are cotranslationally integrated into the membrane. This is Small ribosomal subunit protein uS14m (mrp2) from Neurospora crassa (strain ATCC 24698 / 74-OR23-1A / CBS 708.71 / DSM 1257 / FGSC 987).